A 189-amino-acid polypeptide reads, in one-letter code: NADH-ubiquinone oxidoreductase 20.9 kDa subunit (189 aa).

Residues 73–88 traverse the membrane as a helical segment; the sequence is AMRLATAVGFFGGFLY.

As to quaternary structure, complex I is composed of about 40 different subunits. Post-translationally, the N-terminus is blocked.

The protein resides in the mitochondrion inner membrane. The enzyme catalyses a ubiquinone + NADH + 5 H(+)(in) = a ubiquinol + NAD(+) + 4 H(+)(out). Functionally, transfer of electrons from NADH to the respiratory chain. The immediate electron acceptor for the enzyme is believed to be ubiquinone. This chain is NADH-ubiquinone oxidoreductase 20.9 kDa subunit (nuo20.9), found in Neurospora crassa (strain ATCC 24698 / 74-OR23-1A / CBS 708.71 / DSM 1257 / FGSC 987).